A 510-amino-acid polypeptide reads, in one-letter code: Aromatic-L-amino-acid decarboxylase (510 aa).

A compositionally biased stretch (polar residues) spans 1-17 (MSHIPISNTIPTKQTDG). The tract at residues 1-28 (MSHIPISNTIPTKQTDGNGKANISPDKL) is disordered. Threonine 117 contacts substrate. The pyridoxal 5'-phosphate site is built by alanine 183, serine 184, histidine 227, aspartate 305, and asparagine 334. Histidine 227 contacts substrate. Histidine 227 is an active-site residue. Lysine 337 is modified (N6-(pyridoxal phosphate)lysine). The segment at 358–384 (NAFNVDPLYLKHDMQGSAPDYRHWQIP) is disordered.

This sequence belongs to the group II decarboxylase family. In terms of assembly, homodimer. It depends on pyridoxal 5'-phosphate as a cofactor. Hypoderm isoform is expressed only in hypodermal epithelium and the CNS isoform only in central nervous system. Expressed in the adult head (at protein level).

It catalyses the reaction L-dopa + H(+) = dopamine + CO2. It carries out the reaction 5-hydroxy-L-tryptophan + H(+) = serotonin + CO2. Functionally, catalyzes the decarboxylation of L-3,4-dihydroxyphenylalanine (L-DOPA) to dopamine and L-5-hydroxytryptophan (5-HTP) to serotonin. Catalyzes the formation of serotonin more efficiently than dopamine. Displays no activity to tyrosine. Variation in the synthesis of bioamines may be a factor contributing to natural variation in life span. This Drosophila melanogaster (Fruit fly) protein is Aromatic-L-amino-acid decarboxylase (Ddc).